A 1085-amino-acid chain; its full sequence is Kinesin-like protein cut7 (1085 aa).

The interval 1–70 is disordered; that stretch reads MAPRVAPGGS…TDHALHDENE (70 aa). Residues 24-37 show a composition bias toward polar residues; that stretch reads PVSTPNSHFRSASN. Residues 72–421 form the Kinesin motor domain; sequence NINVVVRVRG…LEYAARAKSI (350 aa). ATP is bound at residue 159–166; it reads GQTGTGKT. Coiled coils occupy residues 436–604, 715–740, and 897–955; these read LIKD…WNLK, ISSELIELQKDMKESYRQLVQELRSL, and LALA…DSIK. 2 repeats span residues 987-998 and 999-1010; these read DESLCNLETTIE and DTSLVKLETTGD. A Phosphothreonine; by CDC2 modification is found at Thr1011. The tract at residues 1049–1085 is disordered; sequence YTSSNQTNEPDVYDKPSNSSRTSLLRSSRSAYSKMKR. Over residues 1065–1078 the composition is skewed to low complexity; it reads SNSSRTSLLRSSRS.

It belongs to the TRAFAC class myosin-kinesin ATPase superfamily. Kinesin family. BimC subfamily.

It is found in the cytoplasm. The protein resides in the cytoskeleton. It localises to the microtubule organizing center. Its subcellular location is the spindle pole body. Functionally, could be a spindle pole body motor. On transition from G2 to M phase of the cell cycle, the spindle pole body duplicates; the daughter pole bodies seed microtubules which interdigitate to form a short spindle that elongates to span the nucleus at metaphase. Mutations at cut7 block spindle formation. This is Kinesin-like protein cut7 (cut7) from Schizosaccharomyces pombe (strain 972 / ATCC 24843) (Fission yeast).